The primary structure comprises 591 residues: DEAD-box ATP-dependent RNA helicase 35 (591 aa).

The Q motif motif lies at 146–174 (KNFKDMKFPRPVLDTLKEKGIVQPTPIQV). A Helicase ATP-binding domain is found at 177-361 (LPVILAGRDM…RSALVKPVTV (185 aa)). ATP is bound at residue 190 to 197 (AFTGSGKT). A DEAD box motif is present at residues 309 to 312 (DEAD). Residues 372–532 (DVIQEVEYVK…RIPPVLAELN (161 aa)) enclose the Helicase C-terminal domain. The CCHC-type zinc-finger motif lies at 548–565 (KGCAYCGGLGHRIRDCPK).

Belongs to the DEAD box helicase family. DDX41 subfamily.

It carries out the reaction ATP + H2O = ADP + phosphate + H(+). The protein is DEAD-box ATP-dependent RNA helicase 35 (RH35) of Arabidopsis thaliana (Mouse-ear cress).